The chain runs to 1039 residues: Potassium-transporting ATPase alpha chain 2 (1039 aa).

Residues 1–102 (MHQKTPEIYS…NSLTPPKQTP (102 aa)) lie on the Cytoplasmic side of the membrane. A helical transmembrane segment spans residues 103 to 123 (EIVKFLKQMVGGFSILLWVGA). Residues 124–146 (FLCWIAYGIQYSSDKSASLNNVY) lie on the Lumenal side of the membrane. A helical membrane pass occupies residues 147–167 (LGCVLGLVVILTGIFAYYQEA). Topologically, residues 168 to 303 (KSTNIMSSFN…NEKTPIAIEI (136 aa)) are cytoplasmic. Residues 304–323 (EHFVHIVAGVAVSIGILFFI) form a helical membrane-spanning segment. Residues 324 to 335 (IAVSLKYQVLDS) are Lumenal-facing. The chain crosses the membrane as a helical span at residues 336 to 353 (IIFLIGIIVANVPEGLLA). Residues 354-787 (TVTVTLSLTA…EEGRLIFDNL (434 aa)) lie on the Cytoplasmic side of the membrane. The active-site 4-aspartylphosphate intermediate is the Asp391. Mg(2+)-binding residues include Asp732 and Asp736. The helical transmembrane segment at 788-807 (KKTIAYSLTKNIAELCPFLI) threads the bilayer. The Lumenal portion of the chain corresponds to 808-817 (YIIVGLPLPI). The helical transmembrane segment at 818–838 (GTITILFIDLGTDIIPSIALA) threads the bilayer. Topologically, residues 839–858 (YEKAESDIMNRKPRHKNKDR) are cytoplasmic. A helical membrane pass occupies residues 859-881 (LVNQPLAVYSYLHIGLMQALGAF). Over 882–933 (LVYFTVYAQEGFLPRTLINLRVEWEKDYVNDLKDSYGQEWTRYQREYLEWTG) the chain is Lumenal. A helical transmembrane segment spans residues 934-953 (YTAFFVGILVQQIADLIIRK). Residues 954-967 (TRRNSIFQQGLFRN) are Cytoplasmic-facing. Residue Ser958 is modified to Phosphoserine; by PKA. The helical transmembrane segment at 968-986 (KVIWVGITSQIIIGLILSY) threads the bilayer. Topologically, residues 987–1001 (GLGSVTALSFTMLRA) are lumenal. Residues 1002–1022 (QYWFVAVPHAILIWVYDEVRK) traverse the membrane as a helical segment. Residues 1023–1039 (LFIRLYPGSWWDKNMYY) are Cytoplasmic-facing.

This sequence belongs to the cation transport ATPase (P-type) (TC 3.A.3) family. Type IIC subfamily. The ATPase pump is composed of a catalytic alpha subunit and an auxiliary non-catalytic beta subunit. The alpha subunit pairs with the beta subunit of gastric H(+)/K(+) ATPase ATP4B or the beta subunit of Na(+)/K(+) ATPases ATP1B1 and ATP1B3; this interaction is required for the formation of a functionally active pump and its targeting at the plasma membrane. As to expression, expressed in airway epithelial cells (at protein level). Found in skin and kidney. Detected in prostate basal cells (at protein level). Expression is increased in benign prostate hyperplasia and tumor tissues (at protein level).

Its subcellular location is the apical cell membrane. It catalyses the reaction K(+)(out) + ATP + H2O + H(+)(in) = K(+)(in) + ADP + phosphate + 2 H(+)(out). It carries out the reaction K(+)(out) + Na(+)(in) + ATP + H2O = K(+)(in) + Na(+)(out) + ADP + phosphate + H(+). Its activity is regulated as follows. The ATPase activity is regulated by monovalent cations and pH. Up-regulated by K(+) ions in a dose-dependent way. Down-regulated by Na(+) ions. Inhibited by Na(+)/K(+)-ATPase inhibitor ouabain and H(+)/K(+)-ATPase inhibitor SCH-28080 with an intermediate sensitivity to completely resistant Na(+)/K(+)-ATPases and highly sensitive H(+)/K(+)-ATPases. In terms of biological role, the catalytic subunit of a H(+)/K(+) ATPase and/or Na(+)/K(+) ATPase pump which transports K(+) ions in exchange for Na(+) and/or H(+) ions across the apical membrane of epithelial cells. Uses ATP as an energy source to pump K(+) ions into the cell while transporting Na(+) and/or H(+) ions to the extracellular compartment. Involved in the maintenance of electrolyte homeostasis through K(+) ion absorption in kidney and colon. In the airway epithelium, may play a primary role in mucus acidification regulating its viscosity and clearance. The protein is Potassium-transporting ATPase alpha chain 2 of Homo sapiens (Human).